We begin with the raw amino-acid sequence, 1224 residues long: MDSTGASQIVSALDVIYSPKSNNSQRQEAQKFLDEVKLCSESPFWGYEIALQNPTNSILKYFGLGLLDHAVKKNWNDYDEGKRVALRKWVMELNFGVQDYDTRYIKEKLATLWVEVAKRTWGEALKQTNPTEEQLLTSWVDMDNNLFELWNINQSSRELALIIFRILFEDVFLLDDLIVLKRMTVIQPLCVMIVCPIEVFAIKYKFSDKWTKFKANEEGWFSVWIPELNNALQQNNSEYIIRLLETLKTCLNWPLTEVIVRNDVLSSLLTCLSSNIPRAQSMALDSIHILLTRPYSNESHYQMTIDRVFDNMDLLDSVYESLLFDPTDDIDETKYPIIKKFVDMISCLYVCVPKIKETNGQIQKYFKLVLKTTYNPSLIVSGLTLDLWCTCLRNDEYLPKLEKYVIPDLLQFAADALVYYEQIDGHISKKFAEIDFQSKSEFQTFCSTYRKRIRDIIRLISCVELDLTYDWLNNRLNNYFSSPFGQQVLSSTFLDHKLEPYLGALSQYMIVECFINGCIRWKIWYPTGDDYDEKLDSILQKLEILSNQLIALNLREPLLLKKQIQNFALFLTMLKDNVLFTLLEKIITSATMDYPEINLEERGAESDAVRDLRYACGIELNRMALLMPESLKKIYPDLESVIARIMPNLSYHEKISFKSFLLIIVLKSSLDMKEERFAAIVDPELLAWSDKTTVVGLSDLHWFMERLGIVQIAEYFQRRDIDENSDLLSIPIDDEGKELKSELTKRWQSLFPVRATRMFIHYSMQSIKTDEEFKMLQDLWRPRIVPILPYITRLLYQLQSYHDPDNWKGLPTVVQSFVKYSTIERFWEAGASNKSKDEFIDEHMKAMQTLRDFADSVGHIIRYTREYTLLVLSAISSLGSVFYLLDESPDLLLNSIAIFKPGSNEISPGVSTHGWKHIMNIAIRPILKGCPKDCLGKFMPAFLPKLFEILDLLLCQKWSSHMNDMDMNPVPTDDDQMTEEILEENLLRQLTTVVVRIVIDCVGQGNANPNSAKSRLNNHQMEMRKIIFNDLNTLAPFLKLLNHLISFKDTKCSFNSILVMKCCLTSVLNQNNTVDEYFTFEVMKNLLLNVLCNSAFKDSFHEALYAFTVIFLTLCKEYPSARAFLFEISNGYNIDELYRNLRSVDEYKTQRALMIDFIDWVKSTSGKEDGNVDHAGDERKRQEKREAILKKANERLIKKNKENGDMLDDPNIEDGAVGNLFDDN.

A disordered region spans residues 1200–1224 (NKENGDMLDDPNIEDGAVGNLFDDN).

Interacts with CEX1.

The sequence is that of Protein MSN5 (MSN5) from Saccharomyces cerevisiae (strain ATCC 204508 / S288c) (Baker's yeast).